Reading from the N-terminus, the 123-residue chain is Galanin peptides (123 aa).

An N-terminal signal peptide occupies residues 1–19; sequence MPRGSVLLLASLLLAAALS. Residues 20-30 constitute a propeptide that is removed on maturation; that stretch reads ATLGLGSPVKE. The span at 53-66 shows a compositional bias: basic and acidic residues; it reads SFQDKHGLAGKREL. The interval 53–79 is disordered; that stretch reads SFQDKHGLAGKRELEPEDEARPGSFDR. The residue at position 61 (Ala61) is an Alanine amide. Ser116 is modified (phosphoserine).

It belongs to the galanin family.

Its subcellular location is the secreted. Its function is as follows. Endocrine hormone of the central and peripheral nervous systems that binds and activates the G protein-coupled receptors GALR1, GALR2, and GALR3. This small neuropeptide may regulate diverse physiologic functions including contraction of smooth muscle of the gastrointestinal and genitourinary tract, growth hormone and insulin release and adrenal secretion. The polypeptide is Galanin peptides (GAL) (Bos taurus (Bovine)).